The sequence spans 224 residues: MQFPAFYVTGTDTGIGKTVASTALLHAVRARGHTAVGMKPVASGCVATPQGWHNEDALALQAASQPQPDYATLNPYALPAALAPELAAADVGVSLSLVPLQLAFAQLRAQAEVVVVEGVGGWAAPLSAQLDQADLVRALQLPVVLVVGVRLGCINHARLTAAAIAADGLRCIGWIANEIDPQMERIEDNIRMLGQRLAMPCWGRIPWRPNAQAEALAQHIRLPQ.

Gly14–Val19 provides a ligand contact to ATP. Residue Thr18 participates in Mg(2+) binding. Lys39 is a catalytic residue. Residue Ser43 participates in substrate binding. ATP contacts are provided by residues Asp56, Glu117–Gly120, and Asn177–Glu178. The Mg(2+) site is built by Asp56 and Glu117.

This sequence belongs to the dethiobiotin synthetase family. In terms of assembly, homodimer. The cofactor is Mg(2+).

It is found in the cytoplasm. The catalysed reaction is (7R,8S)-7,8-diammoniononanoate + CO2 + ATP = (4R,5S)-dethiobiotin + ADP + phosphate + 3 H(+). It functions in the pathway cofactor biosynthesis; biotin biosynthesis; biotin from 7,8-diaminononanoate: step 1/2. In terms of biological role, catalyzes a mechanistically unusual reaction, the ATP-dependent insertion of CO2 between the N7 and N8 nitrogen atoms of 7,8-diaminopelargonic acid (DAPA, also called 7,8-diammoniononanoate) to form a ureido ring. This chain is ATP-dependent dethiobiotin synthetase BioD, found in Xanthomonas campestris pv. campestris (strain ATCC 33913 / DSM 3586 / NCPPB 528 / LMG 568 / P 25).